The sequence spans 318 residues: Ubiquitin-like domain-containing CTD phosphatase 1 (318 aa).

Residues 3–81 (LSLIIKWGGQ…IMMMGTREES (79 aa)) form the Ubiquitin-like domain. One can recognise an FCP1 homology domain in the interval 133 to 294 (PREGKKLLVL…VKLSQYLKEI (162 aa)). Mg(2+) contacts are provided by aspartate 143, aspartate 145, and aspartate 253.

Mg(2+) serves as cofactor.

The protein resides in the nucleus. It carries out the reaction O-phospho-L-seryl-[protein] + H2O = L-seryl-[protein] + phosphate. It catalyses the reaction O-phospho-L-threonyl-[protein] + H2O = L-threonyl-[protein] + phosphate. In terms of biological role, dephosphorylates 26S nuclear proteasomes, thereby decreasing their proteolytic activity. Recruited to the 19S regulatory particle of the 26S proteasome where it dephosphorylates 19S component psmc2 which impairs psmc2 ATPase activity and disrupts 26S proteasome assembly. Has also been reported to stimulate the proteolytic activity of the 26S proteasome. The chain is Ubiquitin-like domain-containing CTD phosphatase 1 (ublcp1) from Xenopus laevis (African clawed frog).